Here is a 505-residue protein sequence, read N- to C-terminus: Catalase (505 aa).

Residues H58 and N131 contribute to the active site. Position 341 (Y341) interacts with heme.

The protein belongs to the catalase family. It depends on heme as a cofactor.

It carries out the reaction 2 H2O2 = O2 + 2 H2O. Its function is as follows. Decomposes hydrogen peroxide into water and oxygen; serves to protect cells from the toxic effects of hydrogen peroxide. The protein is Catalase (kat) of Methanosarcina barkeri (strain Fusaro / DSM 804).